A 419-amino-acid polypeptide reads, in one-letter code: Sphingomyelin phosphodiesterase 2 (419 aa).

A Mg(2+)-binding site is contributed by Glu49. His272 (proton acceptor) is an active-site residue. Helical transmembrane passes span 326–346 (FSGY…VLAA) and 354–374 (AIIL…VYLF).

The protein belongs to the neutral sphingomyelinase family. Mg(2+) serves as cofactor. As to expression, although widely expressed in all tissues examined, except the spleen, high enzymatic activity occurs only in the brain.

Its subcellular location is the cell membrane. It catalyses the reaction a sphingomyelin + H2O = phosphocholine + an N-acylsphing-4-enine + H(+). The catalysed reaction is an N-(acyl)-sphingosylphosphocholine + H2O = an N-acyl-sphingoid base + phosphocholine + H(+). It carries out the reaction 1-O-octadecyl-sn-glycero-3-phosphocholine + H2O = 1-O-octadecyl-sn-glycerol + phosphocholine + H(+). The enzyme catalyses 1-hexadecanoyl-sn-glycero-3-phosphocholine + H2O = 1-hexadecanoyl-sn-glycerol + phosphocholine + H(+). It catalyses the reaction a sphingosylphosphocholine + H2O = a sphingoid base + phosphocholine + H(+). The catalysed reaction is 1-O-hexadecyl-sn-glycero-3-phosphocholine + H2O = 1-O-hexadecyl-sn-glycerol + phosphocholine + H(+). It functions in the pathway lipid metabolism; sphingolipid metabolism. Activated by arachidonic acid. Functionally, catalyzes, at least in vitro, the hydrolysis of sphingomyelin to form ceramide and phosphocholine. Also hydrolyzes 1-O-alkyl-2-lyso-sn-glycero-3-phosphocholine (lyso-platelet-activating factor) in vivo. Also acts on 1-acyl-2-lyso-sn-glycero-3-phosphocholine (lyso-PC) and sphingosylphosphocholine. The protein is Sphingomyelin phosphodiesterase 2 of Mus musculus (Mouse).